The primary structure comprises 90 residues: DNA-directed RNA polymerase subunit omega (90 aa).

Positions 69-90 (RQEQQEQDAAELAAVSSITHNR) are disordered.

The protein belongs to the RNA polymerase subunit omega family. As to quaternary structure, the RNAP catalytic core consists of 2 alpha, 1 beta, 1 beta' and 1 omega subunit. When a sigma factor is associated with the core the holoenzyme is formed, which can initiate transcription.

The catalysed reaction is RNA(n) + a ribonucleoside 5'-triphosphate = RNA(n+1) + diphosphate. Its function is as follows. Promotes RNA polymerase assembly. Latches the N- and C-terminal regions of the beta' subunit thereby facilitating its interaction with the beta and alpha subunits. The polypeptide is DNA-directed RNA polymerase subunit omega (Aliivibrio fischeri (strain ATCC 700601 / ES114) (Vibrio fischeri)).